Reading from the N-terminus, the 363-residue chain is Diheme-cytochrome-encapsulin shell fusion protein (363 aa).

The first 36 residues, 1 to 36 (MVMGILNTFKKVYAVTGFFALLAVFSLSQVGSSAFA), serve as a signal peptide directing secretion. Residues 37 to 74 (ACAKVDDCFSCHTTQELNAVHKNTPYQGQSCIVCHKAF) form a diheme c-type cytochrome region. Cysteine 44, cysteine 47, histidine 48, cysteine 67, cysteine 70, and histidine 71 together coordinate heme. The interval 75 to 94 (AADDTCSDAKDGRFAKISSE) is linker. Residues 95-363 (ININKEDWNK…KCPQAICTLE (269 aa)) are encapsulin domain.

Belongs to the encapsulin family. Family 1 subfamily. As to quaternary structure, the encapsulin nanocompartment is probably formed by 180 monomers, with the N-terminus (diheme domain) inside. There are 36 pores where the pentamers meet as well as 3-fold axis channels and dimer channels. It depends on heme as a cofactor.

Its subcellular location is the encapsulin nanocompartment. In terms of biological role, fusion of the shell and cargo protein of a type 1 encapsulin nanocompartment. Protein missing its signal peptide makes 33 nm particles in E.coli (called cEnc), protein missing its signal peptide and diheme domain (residues 1-86, called Enc) makes 29 nm particles. The cEnc nancompartment encloses c-type heme. The cargo protein NIR-HAO (AC P0DV45) is probably targeted to the nanocompartment by its association with the diheme domain in cEnc; removal of the diheme domain in Enc halves the amount of cargo. The polypeptide is Diheme-cytochrome-encapsulin shell fusion protein (Kuenenia stuttgartiensis).